A 491-amino-acid polypeptide reads, in one-letter code: MANYFNTLNLRQQLAQLGKCRFMGRDEFADGASYLQGKKVVIVGCGAQGLNQGLNMRDSGLDISYALRKEAIAEKRASWRKATENGFKVGTYEELIPQADLVVNLTPDKQHSDVVRTVQPLMKDGAALGYSHGFNIVEVGEQIRKDITVVMVAPKCPGTEVREEYKRGFGVPTLIAVHPENDPKGEGMAIAKAWAAATGGHRAGVLESSFVAEVKSDLMGEQTILCGMLQAGSLLCFDKLVEEGTDPAYAEKLIQFGWETITEALKQGGITLMMDRLSNPAKLRAYALSEQLKEIMAPLFQKHMDDIISGEFSSGMMADWANDDKKLLTWREETGKTAFETAPQYEGKIGEQEYFDKGVLMIAMVKAGVELAFETMVDSGIIEESAYYESLHELPLIANTIARKRLYEMNVVISDTAEYGNYLFSYACVPLLKPFMAELQPGDLGKAIPEGAVDNAQLRDVNEAIRSHAIEQVGKKLRGYMTDMKRIAVAG.

Residues 15-208 form the KARI N-terminal Rossmann domain; that stretch reads AQLGKCRFMG…GGHRAGVLES (194 aa). NADP(+) is bound by residues 45–48, arginine 68, arginine 76, serine 78, and 108–110; these read CGAQ and DKQ. Histidine 132 is an active-site residue. Glycine 158 lines the NADP(+) pocket. KARI C-terminal knotted domains are found at residues 209–344 and 345–484; these read SFVA…TAPQ and YEGK…MTDM. Aspartate 217, glutamate 221, glutamate 389, and glutamate 393 together coordinate Mg(2+). Serine 414 is a binding site for substrate.

The protein belongs to the ketol-acid reductoisomerase family. Requires Mg(2+) as cofactor.

It carries out the reaction (2R)-2,3-dihydroxy-3-methylbutanoate + NADP(+) = (2S)-2-acetolactate + NADPH + H(+). It catalyses the reaction (2R,3R)-2,3-dihydroxy-3-methylpentanoate + NADP(+) = (S)-2-ethyl-2-hydroxy-3-oxobutanoate + NADPH + H(+). The protein operates within amino-acid biosynthesis; L-isoleucine biosynthesis; L-isoleucine from 2-oxobutanoate: step 2/4. It participates in amino-acid biosynthesis; L-valine biosynthesis; L-valine from pyruvate: step 2/4. In terms of biological role, involved in the biosynthesis of branched-chain amino acids (BCAA). Catalyzes an alkyl-migration followed by a ketol-acid reduction of (S)-2-acetolactate (S2AL) to yield (R)-2,3-dihydroxy-isovalerate. In the isomerase reaction, S2AL is rearranged via a Mg-dependent methyl migration to produce 3-hydroxy-3-methyl-2-ketobutyrate (HMKB). In the reductase reaction, this 2-ketoacid undergoes a metal-dependent reduction by NADPH to yield (R)-2,3-dihydroxy-isovalerate. The protein is Ketol-acid reductoisomerase (NADP(+)) of Escherichia coli O6:K15:H31 (strain 536 / UPEC).